Consider the following 302-residue polypeptide: ATP synthase mitochondrial F1 complex assembly factor 1 (302 aa).

The protein belongs to the ATP11 family. Interacts with ATP5F1B; involved in the assembly of the F1 component of the mitochondrial ATP synthase (ATPase).

The protein localises to the mitochondrion inner membrane. Its function is as follows. Has a complex stabilizing activity in the assembly of the mitochondrial F1-F0 complex. The protein is ATP synthase mitochondrial F1 complex assembly factor 1 (atpaf1) of Danio rerio (Zebrafish).